The following is a 571-amino-acid chain: Potassium-transporting ATPase potassium-binding subunit (571 aa).

The next 12 membrane-spanning stretches (helical) occupy residues 5–25 (GWMQ…PLGG), 64–84 (LAYA…LYAL), 136–156 (GLTH…VALI), 179–199 (LYVL…QGMP), 220–240 (VGPV…GGFF), 254–274 (LSNF…TNVF), 285–305 (WAIL…TYWA), 330–350 (FGIA…CGAV), 375–395 (IIGG…VAIF), 421–441 (MLGI…ATVV), 488–508 (LAIG…AIAG), and 527–547 (GGLF…LTFF).

This sequence belongs to the KdpA family. As to quaternary structure, the system is composed of three essential subunits: KdpA, KdpB and KdpC.

Its subcellular location is the cell inner membrane. Part of the high-affinity ATP-driven potassium transport (or Kdp) system, which catalyzes the hydrolysis of ATP coupled with the electrogenic transport of potassium into the cytoplasm. This subunit binds the periplasmic potassium ions and delivers the ions to the membrane domain of KdpB through an intramembrane tunnel. This is Potassium-transporting ATPase potassium-binding subunit from Methylorubrum extorquens (strain PA1) (Methylobacterium extorquens).